A 514-amino-acid polypeptide reads, in one-letter code: Probable outer membrane protein pmp12 (514 aa).

Positions 1 to 21 are cleaved as a signal peptide; the sequence is MTILRNFLTCSALFLALPAAA.

Belongs to the PMP outer membrane protein family.

It localises to the secreted. Its subcellular location is the cell wall. The protein localises to the cell outer membrane. The chain is Probable outer membrane protein pmp12 (pmp12) from Chlamydia pneumoniae (Chlamydophila pneumoniae).